The primary structure comprises 212 residues: Cell division protein SepF (212 aa).

The segment at 32–104 (RYADPDTSYD…APLGSDAHRE (73 aa)) is disordered. Residues 64–73 (EAEEDGGDYG) show a composition bias toward acidic residues.

It belongs to the SepF family. Homodimer. Interacts with FtsZ.

The protein resides in the cytoplasm. In terms of biological role, cell division protein that is part of the divisome complex and is recruited early to the Z-ring. Probably stimulates Z-ring formation, perhaps through the cross-linking of FtsZ protofilaments. Its function overlaps with FtsA. The chain is Cell division protein SepF from Saccharopolyspora erythraea (strain ATCC 11635 / DSM 40517 / JCM 4748 / NBRC 13426 / NCIMB 8594 / NRRL 2338).